Reading from the N-terminus, the 209-residue chain is Zinc finger SWIM domain-containing protein sws1 (209 aa).

Polar residues predominate over residues 1–30; the sequence is MQQGHFTSNSYHSKTLNSSSLPVSSKFSHT. The disordered stretch occupies residues 1–33; the sequence is MQQGHFTSNSYHSKTLNSSSLPVSSKFSHTNDP. The SWIM-type zinc finger occupies 143–203; that stretch reads TTIDLKYWYC…HILAASILRA (61 aa).

In terms of assembly, interacts with rdl1, rlp1 and srs2.

The protein localises to the cytoplasm. It localises to the nucleus. The protein resides in the nucleoplasm. Its function is as follows. Involved in early stages of the homologous recombination repair (HRR) pathway of double-stranded DNA breaks arising during DNA replication or induced by DNA-damaging agents. This chain is Zinc finger SWIM domain-containing protein sws1 (sws1), found in Schizosaccharomyces pombe (strain 972 / ATCC 24843) (Fission yeast).